The following is a 693-amino-acid chain: C6 finger domain transcription factor nscR (693 aa).

Residues 17–43 (CELCRERKVKCDKLDPCTNCSSAGVIC) constitute a DNA-binding region (zn(2)-C6 fungal-type). The tract at residues 589–608 (AANTLSVPHTPPSRSSITSS) is disordered.

It localises to the nucleus. Transcription factor that specifically regulates the neosartoricin B biosynthesis gene cluster. The chain is C6 finger domain transcription factor nscR from Trichophyton rubrum (strain ATCC MYA-4607 / CBS 118892) (Athlete's foot fungus).